The chain runs to 59 residues: UPF0434 protein Noc_2677 (59 aa).

This sequence belongs to the UPF0434 family.

The polypeptide is UPF0434 protein Noc_2677 (Nitrosococcus oceani (strain ATCC 19707 / BCRC 17464 / JCM 30415 / NCIMB 11848 / C-107)).